Here is a 230-residue protein sequence, read N- to C-terminus: Sugar fermentation stimulation protein homolog (230 aa).

Belongs to the SfsA family.

In Thermoanaerobacter pseudethanolicus (strain ATCC 33223 / 39E) (Clostridium thermohydrosulfuricum), this protein is Sugar fermentation stimulation protein homolog.